Consider the following 164-residue polypeptide: Putative pre-16S rRNA nuclease (164 aa).

It belongs to the YqgF nuclease family.

It is found in the cytoplasm. Its function is as follows. Could be a nuclease involved in processing of the 5'-end of pre-16S rRNA. In Rhizobium johnstonii (strain DSM 114642 / LMG 32736 / 3841) (Rhizobium leguminosarum bv. viciae), this protein is Putative pre-16S rRNA nuclease.